The following is a 474-amino-acid chain: MFS transporter SAT21 (474 aa).

6 helical membrane-spanning segments follow: residues 7 to 27 (LVLP…LEVP), 64 to 84 (LVVG…ILYF), 101 to 121 (CVGY…HQVF), 131 to 151 (LFLF…AFVA), 162 to 182 (FLFL…ALAT), and 189 to 209 (LFLP…LLQM). Residues 220 to 252 (KVVGSTSDQTEPFLRSSSNSSQESGTAAPAIDP) form a disordered region. A compositionally biased stretch (polar residues) spans 222–244 (VGSTSDQTEPFLRSSSNSSQESG). Asparagine 238 carries N-linked (GlcNAc...) asparagine glycosylation. 6 helical membrane passes run 276–296 (FICY…AFIF), 315–335 (LALS…ANAT), 346–366 (INIG…IMAW), 374–394 (FIFS…LQGV), 406–426 (SIFA…GPLM), and 445–465 (FLAS…LWAL).

This sequence belongs to the major facilitator superfamily.

The protein resides in the cell membrane. In terms of biological role, MFS transporter; part of the satratoxin SC3 cluster involved in the biosynthesis of satratoxins, trichothecene mycotoxins that are associated with human food poisonings. Satratoxins are suggested to be made by products of multiple gene clusters (SC1, SC2 and SC3) that encode 21 proteins in all, including polyketide synthases, acetyltransferases, and other enzymes expected to modify the trichothecene skeleton. SC1 encodes 10 proteins, SAT1 to SAT10. The largest are SAT8, which encodes a putative polyketide synthase (PKS) with a conventional non-reducing architecture, and SAT10, a putative protein containing four ankyrin repeats and thus may be involved in protein scaffolding. The putative short-chain reductase SAT3 may assist the PKS in some capacity. SAT6 contains a secretory lipase domain and acts probably as a trichothecene esterase. SAT5 encodes a putative acetyltransferase, and so, with SAT6, may affect endogenous protection from toxicity. The probable transcription factor SAT9 may regulate the expression of the SC1 cluster. SC2 encodes proteins SAT11 to SAT16, the largest of which encodes the putative reducing PKS SAT13. SAT11 is a cytochrome P450 monooxygenase, while SAT14 and SAT16 are probable acetyltransferases. The SC2 cluster may be regulated by the transcription factor SAT15. SC3 is a small cluster that encodes 5 proteins, SAT17 to SAT21. SAT21 is a putative MFS-type transporter which may have a role in exporting secondary metabolites. The four other proteins putatively encoded in SC3 include the taurine hydroxylase-like protein SAT17, the O-methyltransferase SAT18, the acetyltransferase SAT19, and the Cys6-type zinc finger SAT20, the latter being probably involved in regulation of SC3 expression. The polypeptide is MFS transporter SAT21 (Stachybotrys chartarum (strain CBS 109288 / IBT 7711) (Toxic black mold)).